We begin with the raw amino-acid sequence, 138 residues long: Cysteine desulfuration protein SufE (138 aa).

Cys51 (cysteine persulfide intermediate) is an active-site residue.

Belongs to the SufE family. As to quaternary structure, homodimer. Interacts with SufS.

It localises to the cytoplasm. It participates in cofactor biosynthesis; iron-sulfur cluster biosynthesis. Participates in cysteine desulfuration mediated by SufS. Cysteine desulfuration mobilizes sulfur from L-cysteine to yield L-alanine and constitutes an essential step in sulfur metabolism for biosynthesis of a variety of sulfur-containing biomolecules. Functions as a sulfur acceptor for SufS, by mediating the direct transfer of the sulfur atom from the S-sulfanylcysteine of SufS, an intermediate product of cysteine desulfuration process. The polypeptide is Cysteine desulfuration protein SufE (Escherichia coli O17:K52:H18 (strain UMN026 / ExPEC)).